Reading from the N-terminus, the 300-residue chain is Acetylglutamate kinase (300 aa).

Residues 73-74 (GG), arginine 95, and asparagine 197 each bind substrate.

Belongs to the acetylglutamate kinase family. ArgB subfamily.

It localises to the cytoplasm. The enzyme catalyses N-acetyl-L-glutamate + ATP = N-acetyl-L-glutamyl 5-phosphate + ADP. It participates in amino-acid biosynthesis; L-arginine biosynthesis; N(2)-acetyl-L-ornithine from L-glutamate: step 2/4. Functionally, catalyzes the ATP-dependent phosphorylation of N-acetyl-L-glutamate. This Polynucleobacter asymbioticus (strain DSM 18221 / CIP 109841 / QLW-P1DMWA-1) (Polynucleobacter necessarius subsp. asymbioticus) protein is Acetylglutamate kinase.